A 122-amino-acid polypeptide reads, in one-letter code: Probable dihydroneopterin aldolase (122 aa).

Residues glutamate 21, tyrosine 54, and 73–74 (LE) each bind substrate. Lysine 101 acts as the Proton donor/acceptor in catalysis.

It belongs to the DHNA family.

It carries out the reaction 7,8-dihydroneopterin = 6-hydroxymethyl-7,8-dihydropterin + glycolaldehyde. It participates in cofactor biosynthesis; tetrahydrofolate biosynthesis; 2-amino-4-hydroxy-6-hydroxymethyl-7,8-dihydropteridine diphosphate from 7,8-dihydroneopterin triphosphate: step 3/4. Catalyzes the conversion of 7,8-dihydroneopterin to 6-hydroxymethyl-7,8-dihydropterin. The sequence is that of Probable dihydroneopterin aldolase (folB) from Chlamydia muridarum (strain MoPn / Nigg).